The sequence spans 655 residues: A-type voltage-gated potassium channel KCND3 (655 aa).

The Cytoplasmic segment spans residues 1-182 (MAAGVAAWLP…FENPHTSTLA (182 aa)). Interaction with KCNIP1 stretches follow at residues 6–21 (AAWL…GWMP) and 70–78 (EKEFFFNED). Zn(2+)-binding residues include His-104, Cys-110, Cys-131, and Cys-132. Ser-153 carries the post-translational modification Phosphoserine. A helical membrane pass occupies residues 183-204 (LVFYYVTGFFIAVSVITNVVET). Topologically, residues 205-223 (VPCGTVPGSKELPCGERYS) are extracellular. A helical membrane pass occupies residues 224-246 (VAFFCLDTACVMIFTVEYLLRLF). Topologically, residues 247–253 (AAPSRYR) are cytoplasmic. Residues 254–277 (FIRSVMSIIDVVAIMPYYIGLVMT) form a helical membrane-spanning segment. Residues 278 to 283 (NNEDVS) are Extracellular-facing. A helical; Voltage-sensor transmembrane segment spans residues 284–306 (GAFVTLRVFRVFRIFKFSRHSQG). Topologically, residues 307-318 (LRILGYTLKSCA) are cytoplasmic. A helical transmembrane segment spans residues 319 to 343 (SELGFLLFSLTMAIIIFATVMFYAE). Over 344 to 352 (KGSSASKFT) the chain is Extracellular. The segment at residues 353–366 (SIPASFWYTIVTMT) is an intramembrane region (helical). K(+) is bound by residues Thr-367, Leu-368, Gly-369, and Tyr-370. Residues 367–372 (TLGYGD) carry the Selectivity filter motif. Residues 367-374 (TLGYGDMV) lie within the membrane without spanning it. A helical transmembrane segment spans residues 378–400 (IAGKIFGSICSLSGVLVIALPVP). Residues 401–655 (VIVSNFSRIY…TSNVVKVSVL (255 aa)) lie on the Cytoplasmic side of the membrane. Position 459 is a phosphothreonine (Thr-459). The segment at 470 to 487 (SLIESQHHHLLHCLEKTT) is interaction with KCNIP1 and KCNIP2. Residues 474–489 (SQHHHLLHCLEKTTGL) form a mediates dendritic targeting region. Positions 523-565 (SSMQNYPSTRSPSLSSHSGLTTTCCSRRSKKTTHLPNSNLPAT) are disordered. Residues 529–548 (PSTRSPSLSSHSGLTTTCCS) show a composition bias toward low complexity. A Phosphoserine; by CaMK2D modification is found at Ser-569. Ser-585 bears the Phosphoserine mark. The disordered stretch occupies residues 616 to 647 (SIPTPPALTPEGESRPPPASPGPNTNIPSITS). A compositionally biased stretch (polar residues) spans 637-647 (GPNTNIPSITS).

The protein belongs to the potassium channel family. D (Shal) (TC 1.A.1.2) subfamily. Kv4.3/KCND3 sub-subfamily. As to quaternary structure, homotetramer. Heterotetramer with KCND2. Associates with the regulatory subunits KCNIP3 and KCNIP4. Interacts with KCNE1, KCNE2, SCN1B and KCNAB1 and DLG1. Component of heteromultimeric potassium channels. Identified in potassium channel complexes containing KCND1, KCND2, KCND3, KCNIP1, KCNIP2, KCNIP3, KCNIP4, DPP6 and DPP10. Interacts with KCNIP1; each KCNIP1 monomer interacts with two adjacent KCND3 subunits, through both the N-terminal inactivation ball of a KCND3 subunit and a C-terminal helix from the adjacent KCND3 subunit, clamping them together; this interaction stabilizes the tetrameric form and modulates the channel gating kinetics namely channel activation and inactivation kinetics and rate of recovery from inactivation. Interacts with DPP6; this interaction modulates the channel gating kinetics namely channel activation and inactivation kinetics and rate of recovery from inactivation. Interacts with KCNIP2; each KCNIP2 monomer interacts with two adjacent KCND3 subunits, through both the N-terminal inactivation ball of a KCND3 subunit and a C-terminal helix from the adjacent KCND3 subunit, clamping them together; this interaction modulates the channel gating kinetics. Post-translationally, regulated through phosphorylation at Ser-569 by CaMK2D. As to expression, highly expressed in brain, in particular in the retrosplenial cortex, medial habenula, anterior thalamus, hippocampus, cerebellum and lateral geniculate and superior colliculus. Highly expressed in heart atrium (at protein level) and throughout the ventricle wall, in lung and vas deferens.

The protein localises to the cell membrane. The protein resides in the sarcolemma. It localises to the cell projection. It is found in the dendrite. The catalysed reaction is K(+)(in) = K(+)(out). Functionally, pore-forming (alpha) subunit of voltage-gated A-type potassium channels that mediates transmembrane potassium transport in excitable membranes, in brain and heart. In cardiomyocytes, may generate the transient outward potassium current I(To). In neurons, may conduct the transient subthreshold somatodendritic A-type potassium current (ISA). Kinetics properties are characterized by fast activation at subthreshold membrane potentials, rapid inactivation, and quick recovery from inactivation. Channel properties are modulated by interactions with regulatory subunits. Interaction with the regulatory subunits KCNIP1 or KCNIP2 modulates the channel gating kinetics namely channel activation and inactivation kinetics and rate of recovery from inactivation. Likewise, interaction with DPP6 modulates the channel gating kinetics namely channel activation and inactivation kinetics. This is A-type voltage-gated potassium channel KCND3 from Rattus norvegicus (Rat).